Reading from the N-terminus, the 146-residue chain is Cytochrome c-type biogenesis protein CcmE (146 aa).

Over 1-7 the chain is Cytoplasmic; that stretch reads MQAKHQR. The helical; Signal-anchor for type II membrane protein transmembrane segment at 8-28 threads the bilayer; that stretch reads LILGIIALAAVIAAGFLALVA. Over 29-146 the chain is Periplasmic; it reads FKKQAAYFFT…AATQTTLQEK (118 aa). Residues histidine 123 and tyrosine 127 each contribute to the heme site.

It belongs to the CcmE/CycJ family.

It localises to the cell inner membrane. Heme chaperone required for the biogenesis of c-type cytochromes. Transiently binds heme delivered by CcmC and transfers the heme to apo-cytochromes in a process facilitated by CcmF and CcmH. This Zymomonas mobilis subsp. mobilis (strain ATCC 31821 / ZM4 / CP4) protein is Cytochrome c-type biogenesis protein CcmE.